The sequence spans 317 residues: Pinoresinol reductase 2 (317 aa).

Positions 18, 20, 21, 41, 50, 90, 91, 95, 98, and 121 each coordinate NADP(+). Met-125 is a binding site for (-)-pinoresinol. NADP(+) is bound by residues Lys-144 and Phe-166. Lys-144 (proton acceptor) is an active-site residue. Gly-178 contacts (-)-pinoresinol.

Belongs to the NmrA-type oxidoreductase family. Isoflavone reductase subfamily. Forms homodimers. Expressed in roots. Detected in stems.

The enzyme catalyses (-)-lariciresinol + NADP(+) = (-)-pinoresinol + NADPH + H(+). Functionally, reductase involved in lignan biosynthesis. Unlike conventional pinoresinol reductases that can reduce both pinoresinol and lariciresinol, PRR2 shows a strict substrate selectivity for (-)-pinoresinol. No activity with (+)-pinoresinol or lariciresinol. Abstracts the 4R-hydride from the NADPH cofactor during catalysis. This is Pinoresinol reductase 2 from Arabidopsis thaliana (Mouse-ear cress).